Consider the following 86-residue polypeptide: U15-lycotoxin-Ls1d (86 aa).

The signal sequence occupies residues 1 to 20 (MNSKIFAVLFLLAFLSCVLS). One can recognise a WAP domain in the interval 21 to 66 (DQYCPKSSITACKKMNIRNDCCKDDDCTGGSWCCATPCGNFCKYPT). Intrachain disulfides connect Cys-24-Cys-54, Cys-32-Cys-58, Cys-41-Cys-53, Cys-42-Cys-80, and Cys-47-Cys-62.

It belongs to the venom protein 11 family. 01 (wap-1) subfamily. In terms of processing, contains 5 disulfide bonds. As to expression, expressed by the venom gland.

The protein resides in the secreted. Its function is as follows. Has antibacterial activity. In Lycosa singoriensis (Wolf spider), this protein is U15-lycotoxin-Ls1d.